A 110-amino-acid chain; its full sequence is Phosphoribosyl-AMP cyclohydrolase (110 aa).

A Mg(2+)-binding site is contributed by Asp-74. Cys-75 is a binding site for Zn(2+). 2 residues coordinate Mg(2+): Asp-76 and Asp-78. 2 residues coordinate Zn(2+): Cys-91 and Cys-98.

The protein belongs to the PRA-CH family. In terms of assembly, homodimer. Mg(2+) serves as cofactor. Zn(2+) is required as a cofactor.

The protein localises to the cytoplasm. The enzyme catalyses 1-(5-phospho-beta-D-ribosyl)-5'-AMP + H2O = 1-(5-phospho-beta-D-ribosyl)-5-[(5-phospho-beta-D-ribosylamino)methylideneamino]imidazole-4-carboxamide. The protein operates within amino-acid biosynthesis; L-histidine biosynthesis; L-histidine from 5-phospho-alpha-D-ribose 1-diphosphate: step 3/9. In terms of biological role, catalyzes the hydrolysis of the adenine ring of phosphoribosyl-AMP. The sequence is that of Phosphoribosyl-AMP cyclohydrolase from Lacticaseibacillus casei (strain BL23) (Lactobacillus casei).